Here is a 945-residue protein sequence, read N- to C-terminus: Kinesin-like protein KIN-7F (945 aa).

A Kinesin motor domain is found at 34–356 (RILVSVRLRP…LLFASCAKEV (323 aa)). Position 120–127 (120–127 (GQTSSGKT)) interacts with ATP. The stretch at 365 to 437 (VMSDKALVKQ…QDLLQVVGDN (73 aa)) forms a coiled coil. 2 disordered regions span residues 484–512 (RRVAQREHKPQQAENNVQFTTPSRYSVSS) and 553–588 (NECLESSAVGSNSLQDPNAGSSMHINNDSNSSMNSR). 2 stretches are compositionally biased toward polar residues: residues 495 to 512 (QAENNVQFTTPSRYSVSS) and 560 to 587 (AVGSNSLQDPNAGSSMHINNDSNSSMNS).

Belongs to the TRAFAC class myosin-kinesin ATPase superfamily. Kinesin family. KIN-7 subfamily. Binds microtubules.

Binds ATP/ADP in vitro. Possesses low ATPase activity but high affinity for microtubules. This Oryza sativa subsp. japonica (Rice) protein is Kinesin-like protein KIN-7F.